The following is a 559-amino-acid chain: MKTTKLLIPTQKEVPNDAQIISHQLMIRAGLISKLASGLYSYLPMGVRVLHKVENIIRQEMNKSGAQEVFMPVVQPAELWKTSGRWDKYGTELLRFTDRHQREFCLGPTHEEVITHLAAQYLRSYKQLPMNFYQIQTKFRDEIRPRFGVMRSREFIMKDAYSFHLDQYSLQQTYDVMYQTYCNIFDRLSLDYHAVLADSGSIGGDASHEFHVLAESGEDTICFSDESNYAANIEKVSFLKQEKTCKSTLTEERVLTKKKNSIEEVAEFLNVNKSDCVKILIIKTKDGFKALALRGDHELNEIKAHNLFGNFEFAIDDEIKNLDLKKGFIGIKDLDIDLIVDYSASVLCDFVCGANEWDYHLMSVNWQGIEFVDADLRSAVEGDYSPDGKGKLIIKRGIEVGHIFQLGTKYSSAMKVNVIGESGKAITTTMGCYGIGVTRIIAASIEQNYDDKGIIFPQAIAPFQVVIVPINYNKSTRVKALSDKLYQQFIGAGIEVLLDDRKERAGIMFADSELLGIPHRMVISDTHADNGNVEYKARDKIDKMQMKFDDALSFIQFKL.

Belongs to the class-II aminoacyl-tRNA synthetase family. ProS type 1 subfamily. In terms of assembly, homodimer.

It localises to the cytoplasm. It catalyses the reaction tRNA(Pro) + L-proline + ATP = L-prolyl-tRNA(Pro) + AMP + diphosphate. In terms of biological role, catalyzes the attachment of proline to tRNA(Pro) in a two-step reaction: proline is first activated by ATP to form Pro-AMP and then transferred to the acceptor end of tRNA(Pro). As ProRS can inadvertently accommodate and process non-cognate amino acids such as alanine and cysteine, to avoid such errors it has two additional distinct editing activities against alanine. One activity is designated as 'pretransfer' editing and involves the tRNA(Pro)-independent hydrolysis of activated Ala-AMP. The other activity is designated 'posttransfer' editing and involves deacylation of mischarged Ala-tRNA(Pro). The misacylated Cys-tRNA(Pro) is not edited by ProRS. In Ruthia magnifica subsp. Calyptogena magnifica, this protein is Proline--tRNA ligase.